An 83-amino-acid polypeptide reads, in one-letter code: Apolipoprotein C-I, basic form (83 aa).

The first 26 residues, Met1–Gly26, serve as a signal peptide directing secretion.

It belongs to the apolipoprotein C1 family.

It is found in the secreted. Functionally, inhibitor of lipoprotein binding to the low density lipoprotein (LDL) receptor, LDL receptor-related protein, and very low density lipoprotein (VLDL) receptor. Associates with high density lipoproteins (HDL) and the triacylglycerol-rich lipoproteins in the plasma and makes up about 10% of the protein of the VLDL and 2% of that of HDL. Appears to interfere directly with fatty acid uptake and is also the major plasma inhibitor of cholesteryl ester transfer protein (CETP). Binds free fatty acids and reduces their intracellular esterification. Modulates the interaction of APOE with beta-migrating VLDL and inhibits binding of beta-VLDL to the LDL receptor-related protein. The sequence is that of Apolipoprotein C-I, basic form (APOC1B) from Cercocebus atys (Sooty mangabey).